The following is a 282-amino-acid chain: Plant cysteine oxidase 3 (282 aa).

The Fe cation site is built by histidine 131, histidine 133, and histidine 202.

It belongs to the cysteine dioxygenase family. It depends on Fe(2+) as a cofactor.

Its subcellular location is the nucleus. The protein resides in the cytoplasm. The catalysed reaction is L-cysteine + O2 = 3-sulfino-L-alanine + H(+). In terms of biological role, catalyzes the oxidation of N-terminal cysteine residues (N-Cys), thus preparing the protein for N-end rule pathway-mediated proteasomal degradation, upstream of the N-end rule enzymes ATE1, ATE2 and PRT6. Controls the preparation of the group VII ethylene response factor (ERF-VII) proteins for degradation via the 26S proteasome N-end rule pathway. Acts as an oxygen sensor that controls the stability of ERF-VII proteins, which are stabilized in flooding-induced hypoxia, and regulate transcriptional adaptation to these adverse conditions. This chain is Plant cysteine oxidase 3, found in Arabidopsis thaliana (Mouse-ear cress).